The sequence spans 208 residues: Protein Nef (208 aa).

Positions 1–33 are disordered; sequence MGGKWSKRMSGWSAVRERMKRAEPAEPAADGVG. The N-myristoyl glycine; by host moiety is linked to residue G2. S6 carries the phosphoserine; by host modification. The segment covering 15–24 has biased composition (basic and acidic residues); sequence VRERMKRAEP. The segment at 64–67 is acidic; interacts with host PACS1 and PACS2; stabilizes the interaction of NEF/MHC-I with host AP1M1; necessary for MHC-I internalization; the sequence is EDED. Residues 71-80 are SH3-binding; interaction with Src family tyrosine kinases; the sequence is PVRPQVPLRP. The PxxP; stabilizes the interaction of NEF/MHC-I with host AP1M1; necessary for MHC-I internalization signature appears at 74–77; sequence PQVP. The tract at residues 110–126 is mediates dimerization, Nef-PTE1 interaction; sequence DILDLWIHHTQGYFPDW. Residues 150–182 form a binding to ATP6V1H region; it reads VDPDYVEEANAGENNSLLHPMSQHGMDDPEKEV. The short motif at 166–167 is the Dileucine internalization motif; necessary for CD4 internalization element; that stretch reads LL. The short motif at 176–177 is the Diacidic; necessary for CD4 internalization element; sequence DD.

The protein belongs to the lentivirus primate group Nef protein family. As to quaternary structure, monomer; cytosolic form. Homodimer; membrane bound form. Interacts with Nef associated p21-activated kinase (PAK2); this interaction activates PAK2. Associates with the Nef-MHC-I-AP1 complex; this complex is required for MHC-I internalization. Interacts (via C-terminus) with host PI3-kinase. Interacts with host PACS1; this interaction seems to be weak. Interacts with host PACS2. Interacts with host LCK and MAPK3; these interactions inhibit the kinase activity of the latter. Interacts with host ATP6V1H; this interaction may play a role in CD4 endocytosis. Associates with the CD4-Nef-AP2 complex; this complex is required for CD4 internalization. Interacts with host AP2 subunit alpha and AP2 subunit sigma2. Interacts with TCR-zeta chain; this interaction up-regulates the Fas ligand (FasL) surface expression. Interacts with host HCK, LYN, and SRC; these interactions activate the Src family kinases. Interacts with MAP3K5; this interaction inhibits the Fas and TNFR-mediated death signals. Interacts with beta-COP and PTE1. Interacts with human RACK1; this increases Nef phosphorylation by PKC. Interacts with TP53; this interaction decreases the half-life of TP53, protecting the infected cell against p53-mediated apoptosis. Post-translationally, the virion-associated Nef proteins are cleaved by the viral protease to release the soluble C-terminal core protein. Nef is probably cleaved concomitantly with viral structural proteins on maturation of virus particles. Myristoylated. In terms of processing, phosphorylated on serine residues, probably by host PKCdelta and theta.

The protein localises to the host cell membrane. The protein resides in the virion. Its subcellular location is the secreted. It localises to the host Golgi apparatus membrane. Functionally, factor of infectivity and pathogenicity, required for optimal virus replication. Alters numerous pathways of T-lymphocyte function and down-regulates immunity surface molecules in order to evade host defense and increase viral infectivity. Alters the functionality of other immunity cells, like dendritic cells, monocytes/macrophages and NK cells. In infected CD4(+) T-lymphocytes, down-regulates the surface MHC-I, mature MHC-II, CD4, CD28, CCR5 and CXCR4 molecules. Mediates internalization and degradation of host CD4 through the interaction of with the cytoplasmic tail of CD4, the recruitment of AP-2 (clathrin adapter protein complex 2), internalization through clathrin coated pits, and subsequent transport to endosomes and lysosomes for degradation. Diverts host MHC-I molecules to the trans-Golgi network-associated endosomal compartments by an endocytic pathway to finally target them for degradation. MHC-I down-regulation may involve AP-1 (clathrin adapter protein complex 1) or possibly Src family kinase-ZAP70/Syk-PI3K cascade recruited by PACS2. In consequence infected cells are masked for immune recognition by cytotoxic T-lymphocytes. Decreasing the number of immune receptors also prevents reinfection by more HIV particles (superinfection). Down-regulates host SERINC3 and SERINC5 thereby excluding these proteins from the viral particles. Virion infectivity is drastically higher when SERINC3 or SERINC5 are excluded from the viral envelope, because these host antiviral proteins impair the membrane fusion event necessary for subsequent virion penetration. Its function is as follows. Bypasses host T-cell signaling by inducing a transcriptional program nearly identical to that of anti-CD3 cell activation. Interaction with TCR-zeta chain up-regulates the Fas ligand (FasL). Increasing surface FasL molecules and decreasing surface MHC-I molecules on infected CD4(+) cells send attacking cytotoxic CD8+ T-lymphocytes into apoptosis. In terms of biological role, plays a role in optimizing the host cell environment for viral replication without causing cell death by apoptosis. Protects the infected cells from apoptosis in order to keep them alive until the next virus generation is ready to strike. Inhibits the Fas and TNFR-mediated death signals by blocking MAP3K5/ASK1. Decreases the half-life of TP53, protecting the infected cell against p53-mediated apoptosis. Inhibits the apoptotic signals regulated by the Bcl-2 family proteins through the formation of a Nef/PI3-kinase/PAK2 complex that leads to activation of PAK2 and induces phosphorylation of host BAD. Functionally, extracellular Nef protein targets CD4(+) T-lymphocytes for apoptosis by interacting with CXCR4 surface receptors. This Human immunodeficiency virus type 1 group M subtype B (isolate SF162) (HIV-1) protein is Protein Nef.